Here is a 137-residue protein sequence, read N- to C-terminus: Protein LTO1 homolog (137 aa).

Residue alanine 2 is modified to N-acetylalanine. Residues 22-58 are deca-GX3 motif; required for interaction with YAE1 and the CIA complex; the sequence is GYQEGYEEGSSLGIVEGKRYGMVHGAKIGSEIGCYRG.

The protein belongs to the LTO1 family. Forms a complex with YAE1. Interacts with PYCR1 and PYCR2.

The protein resides in the nucleus. Its function is as follows. The complex LTO1:YAE1 functions as a target specific adapter that probably recruits apo-ABCE1 to the cytosolic iron-sulfur protein assembly (CIA) complex machinery. May be required for biogenesis of the large ribosomal subunit and initiation of translation. May play a role in the regulation of proline metabolism and ROS production. The sequence is that of Protein LTO1 homolog from Mus musculus (Mouse).